A 1440-amino-acid polypeptide reads, in one-letter code: ABC transporter G family member 46 (1440 aa).

Residues 1–42 (MDDDVDAGEIYAVDRQREEGSASAAAFSRSPSTGRVDDDDDD) are disordered. Positions 21 to 32 (SASAAAFSRSPS) are enriched in low complexity. The region spanning 137 to 419 (ANTLHMTTRS…FKSLGFKCLE (283 aa)) is the ABC transporter 1 domain. 170–177 (GSPGSGKT) contributes to the ATP binding site. In terms of domain architecture, ABC transmembrane type-2 1 spans 497–710 (KILKANIDRE…ALNALAVNEF (214 aa)). Helical transmembrane passes span 516-536 (LYIFNALQLTLVAIIAMSVFI), 561-581 (AIMFKGLAEMGAALANLPVFF), 603-623 (TPISFLNTIIWVSITYYVIGF), 634-654 (FLVLFVMSEAICGLFRFIAAL), 659-679 (VVASTVSEFCILIVMVSSGFI), 688-708 (WLIWEYWTSPLMYALNALAVN), and 745-765 (IGLGALLGYVLLFNILYTICL). Positions 794-829 (DQEPSSGGRVTNDKRYTEGGNNDEATSSNANHNSSP) are disordered. Residues 812–829 (GGNNDEATSSNANHNSSP) are compositionally biased toward polar residues. The ABC transporter 2 domain occupies 843 to 1095 (MTFEDIRYSI…ELIKYFESIE (253 aa)). ATP is bound at residue 888–895 (GISGAGKT). Residues 1168–1382 (IQCLACLWKQ…TINGLVTSQF (215 aa)) form the ABC transmembrane type-2 2 domain. The next 7 membrane-spanning stretches (helical) occupy residues 1188-1208 (IAVNFFFTVVIALLFGTMFWG), 1219-1236 (LLSAMGSMYSTCFTLGVQ), 1271-1291 (VVVELPYIFLQTLIYGVIVYS), 1302-1322 (FFWYMFFMYFTLSYFTFYGMM), 1332-1352 (MSSIVSTTFYAIWHLFSGFLI), 1357-1377 (IPIWWRWYYWICPVAWTINGL), and 1410-1430 (LWVAAMAVVSFAILFAILFGF).

It belongs to the ABC transporter superfamily. ABCG family. PDR (TC 3.A.1.205) subfamily.

The protein localises to the membrane. Functionally, may be a general defense protein. The chain is ABC transporter G family member 46 from Oryza sativa subsp. japonica (Rice).